The primary structure comprises 430 residues: Trigger factor (430 aa).

One can recognise a PPIase FKBP-type domain in the interval 163–248 (GDTVVFDFAG…IHEIKAQELP (86 aa)).

Belongs to the FKBP-type PPIase family. Tig subfamily.

The protein resides in the cytoplasm. The catalysed reaction is [protein]-peptidylproline (omega=180) = [protein]-peptidylproline (omega=0). Involved in protein export. Acts as a chaperone by maintaining the newly synthesized protein in an open conformation. Functions as a peptidyl-prolyl cis-trans isomerase. This chain is Trigger factor, found in Exiguobacterium sibiricum (strain DSM 17290 / CCUG 55495 / CIP 109462 / JCM 13490 / 255-15).